The following is a 148-amino-acid chain: Large ribosomal subunit protein bL9 (148 aa).

It belongs to the bacterial ribosomal protein bL9 family.

Binds to the 23S rRNA. The polypeptide is Large ribosomal subunit protein bL9 (Frankia casuarinae (strain DSM 45818 / CECT 9043 / HFP020203 / CcI3)).